The following is a 37-amino-acid chain: Large ribosomal subunit protein bL36c (37 aa).

Belongs to the bacterial ribosomal protein bL36 family.

It localises to the plastid. Its subcellular location is the chloroplast. In Pisum sativum (Garden pea), this protein is Large ribosomal subunit protein bL36c (rpl36).